The following is a 25-amino-acid chain: Toxin LyeTx 1 (25 aa).

Leucine 25 carries the leucine amide modification.

Expressed by the venom gland.

It is found in the secreted. In terms of biological role, has antimicrobial activity against Gram-positive bacterium S.aureus (MIC=3.79 uM), Gram-negative bacterium E.coli (MIC=7.81 uM) and yeasts C.krusei (MIC=26.3 uM) and C.neoformans (MIC=13.2 uM). Has hemolytic activity against rabbit erythrocytes. Forms pores in lipid bilayers in vitro; pore formation is reduced when cholesterol is present in the bilayers. This chain is Toxin LyeTx 1, found in Lycosa erythrognatha (Wolf spider).